A 206-amino-acid chain; its full sequence is Protein GrpE (206 aa).

Residues 1-64 (MSKKASMHKE…KALEEAQQQA (64 aa)) form a disordered region. Positions 46 to 58 (SDAKVQELEKALE) are enriched in basic and acidic residues.

Belongs to the GrpE family. As to quaternary structure, homodimer.

It localises to the cytoplasm. Its function is as follows. Participates actively in the response to hyperosmotic and heat shock by preventing the aggregation of stress-denatured proteins, in association with DnaK and GrpE. It is the nucleotide exchange factor for DnaK and may function as a thermosensor. Unfolded proteins bind initially to DnaJ; upon interaction with the DnaJ-bound protein, DnaK hydrolyzes its bound ATP, resulting in the formation of a stable complex. GrpE releases ADP from DnaK; ATP binding to DnaK triggers the release of the substrate protein, thus completing the reaction cycle. Several rounds of ATP-dependent interactions between DnaJ, DnaK and GrpE are required for fully efficient folding. The polypeptide is Protein GrpE (Prosthecochloris aestuarii (strain DSM 271 / SK 413)).